Here is a 273-residue protein sequence, read N- to C-terminus: Dermonecrotic toxin LvSicTox-alphaIC1ai (273 aa).

H5 is a catalytic residue. E25 and D27 together coordinate Mg(2+). H41 (nucleophile) is an active-site residue. 2 disulfides stabilise this stretch: C45/C51 and C47/C190. D85 is a Mg(2+) binding site.

Belongs to the arthropod phospholipase D family. Class II subfamily. Mg(2+) serves as cofactor. Expressed by the venom gland.

It localises to the secreted. It carries out the reaction an N-(acyl)-sphingosylphosphocholine = an N-(acyl)-sphingosyl-1,3-cyclic phosphate + choline. It catalyses the reaction an N-(acyl)-sphingosylphosphoethanolamine = an N-(acyl)-sphingosyl-1,3-cyclic phosphate + ethanolamine. The catalysed reaction is a 1-acyl-sn-glycero-3-phosphocholine = a 1-acyl-sn-glycero-2,3-cyclic phosphate + choline. The enzyme catalyses a 1-acyl-sn-glycero-3-phosphoethanolamine = a 1-acyl-sn-glycero-2,3-cyclic phosphate + ethanolamine. Its function is as follows. Dermonecrotic toxins cleave the phosphodiester linkage between the phosphate and headgroup of certain phospholipids (sphingolipid and lysolipid substrates), forming an alcohol (often choline) and a cyclic phosphate. This toxin acts on sphingomyelin (SM). It may also act on ceramide phosphoethanolamine (CPE), lysophosphatidylcholine (LPC) and lysophosphatidylethanolamine (LPE), but not on lysophosphatidylserine (LPS), and lysophosphatidylglycerol (LPG). It acts by transphosphatidylation, releasing exclusively cyclic phosphate products as second products. Induces dermonecrosis, hemolysis, increased vascular permeability, edema, inflammatory response, and platelet aggregation. The chain is Dermonecrotic toxin LvSicTox-alphaIC1ai from Loxosceles variegata (Recluse spider).